The chain runs to 263 residues: MRIFRPWRLRCPALHLPSLSVFSLRWKLPSLTTDETMCKSVTTDEWKKVFYEKMEEAKPADSWDLIIDPNLKHNVLSPGWKQYLELHASGRFHCSWCWHTWQSPYVVILFHMFLDRAQRAGSVRMRVFKQLCYECGTARLDESSMLEENIEGLVDNLITSLREQCYGERGGQYRIHVASRQDNRRHRGEFCEACQEGIVHWKPSEKLLEEEATTYTFSRAPSPTKSQDQTGSGWNFCSIPWCLFWATVLLLIIYLQFSFRSSV.

At 1–238 (MRIFRPWRLR…QTGSGWNFCS (238 aa)) the chain is on the cytoplasmic side. The 3CxxC-type zinc finger occupies 88–197 (ASGRFHCSWC…GEFCEACQEG (110 aa)). Residues 239–259 (IPWCLFWATVLLLIIYLQFSF) traverse the membrane as a helical segment. Over 260–263 (RSSV) the chain is Extracellular.

The protein belongs to the TMEM7 family. In terms of assembly, interacts with olfactory receptors. In terms of tissue distribution, expressed in testis.

It is found in the cell membrane. Its function is as follows. Specifically promotes functional cell surface expression of olfactory receptors, but not of other GPCRs. The sequence is that of Receptor-transporting protein 1 (RTP1) from Homo sapiens (Human).